Here is a 71-residue protein sequence, read N- to C-terminus: uncharacterized protein (71 aa).

The 57-residue stretch at 15–71 (PNFEYARRLNGKKVKIFLRNGEVLDAEVTGVSNYEIMVKVGDRNLLVFKHAIDYIEY) folds into the Sm domain.

This is an uncharacterized protein from Methanocaldococcus jannaschii (strain ATCC 43067 / DSM 2661 / JAL-1 / JCM 10045 / NBRC 100440) (Methanococcus jannaschii).